Here is a 318-residue protein sequence, read N- to C-terminus: Protein-L-histidine N-pros-methyltransferase (318 aa).

A signal peptide spans 1–18 (MRLLAGWLCLSLASVWLA). Asn-35 carries an N-linked (GlcNAc...) asparagine glycan. S-adenosyl-L-homocysteine contacts are provided by Glu-174, Asn-210, and Tyr-295.

It belongs to the METTL9 family.

It localises to the endoplasmic reticulum. Its subcellular location is the mitochondrion. The enzyme catalyses L-histidyl-[protein] + S-adenosyl-L-methionine = N(pros)-methyl-L-histidyl-[protein] + S-adenosyl-L-homocysteine + H(+). Its function is as follows. Protein-histidine N-methyltransferase that specifically catalyzes 1-methylhistidine (pros-methylhistidine) methylation of target proteins. Specifically methylates the second His of proteins with a His-x-His (HxH) motif (where 'x' is preferably a small amino acid), while exploiting the first one as a recognition signature. Catalyzes methylation of target proteins such as S100A9, NDUFB3, SLC39A5, SLC39A7, ARMC6 and DNAJB12; 1-methylhistidine modification may affect the binding of zinc and other metals to its target proteins. Constitutes the main methyltransferase for the 1-methylhistidine modification in cell. The chain is Protein-L-histidine N-pros-methyltransferase from Bos taurus (Bovine).